The chain runs to 400 residues: Argininosuccinate synthase (400 aa).

8 to 16 (AYSGGLDTS) contacts ATP. Y87 provides a ligand contact to L-citrulline. G117 is a binding site for ATP. Residues T119, N123, and D124 each contribute to the L-aspartate site. N123 is an L-citrulline binding site. L-citrulline contacts are provided by R127, S175, E260, and Y272.

It belongs to the argininosuccinate synthase family. Type 1 subfamily. In terms of assembly, homotetramer.

The protein resides in the cytoplasm. It carries out the reaction L-citrulline + L-aspartate + ATP = 2-(N(omega)-L-arginino)succinate + AMP + diphosphate + H(+). Its pathway is amino-acid biosynthesis; L-arginine biosynthesis; L-arginine from L-ornithine and carbamoyl phosphate: step 2/3. The chain is Argininosuccinate synthase from Mycobacterium sp. (strain KMS).